The primary structure comprises 107 residues: Iron-binding protein IscA (107 aa).

Positions 35, 99, and 101 each coordinate Fe cation.

It belongs to the HesB/IscA family. In terms of assembly, homodimer; may form tetramers and higher multimers. The cofactor is Fe cation.

In terms of biological role, is able to transfer iron-sulfur clusters to apo-ferredoxin. Multiple cycles of [2Fe2S] cluster formation and transfer are observed, suggesting that IscA acts catalytically. Recruits intracellular free iron so as to provide iron for the assembly of transient iron-sulfur cluster in IscU in the presence of IscS, L-cysteine and the thioredoxin reductase system TrxA/TrxB. This chain is Iron-binding protein IscA, found in Salmonella newport (strain SL254).